The sequence spans 2439 residues: Mucin-6 (2439 aa).

A signal peptide spans 1 to 22 (MVQRWLLLSCCGALLSAGLANT). Positions 43–214 (GQCSTWGAGH…KLDDPGEICT (172 aa)) constitute a VWFD 1 domain. Intrachain disulfides connect Cys-45-Cys-176 and Cys-67-Cys-213. Asn-268 carries N-linked (GlcNAc...) asparagine glycosylation. The TIL domain occupies 302 to 357 (CPANQVYQECGSACVKTCSNPQHSCSSSCTFGCFCPEGTVLNDLSNNHTCVPVTQC). The VWFD 2 domain maps to 395–579 (GHCSLEGGSF…ALERETDPCS (185 aa)). 2 cysteine pairs are disulfide-bonded: Cys-397/Cys-533 and Cys-419/Cys-578. Residues Asn-486 and Asn-659 are each glycosylated (N-linked (GlcNAc...) asparagine). A VWFD 3 domain is found at 866–1038 (STCTLYGEGH…NSWKESPLCG (173 aa)). Disulfide bonds link Cys-868/Cys-1002, Cys-890/Cys-1037, Cys-899/Cys-999, and Cys-917/Cys-924. N-linked (GlcNAc...) asparagine glycans are attached at residues Asn-975 and Asn-1179. Disordered stretches follow at residues 1202–1455 (PQPP…TSLV), 1471–1626 (ATSA…LVTP), 1642–1834 (SASI…HPHT), 1868–1983 (SIHS…STGP), 2033–2077 (ATSA…THSS), 2090–2196 (SSSW…SASP), 2233–2278 (VSPT…SLTT), and 2323–2348 (LTAH…SPGV). Positions 1224–1265 (TGTSTTIGLLSSTGPSPSSNHTPASPTQTPLLPATLTSSKPT) are enriched in low complexity. A compositionally biased stretch (polar residues) spans 1276 to 1286 (TAVTPQATSGL). Residues 1294-1339 (STATKPTVTQATTRATASTASPATTSTAQSTTRTTMTLPTPATSGT) show a composition bias toward low complexity. Over residues 1340-1351 (SPTLPKSTNQEL) the composition is skewed to polar residues. Low complexity-rich tracts occupy residues 1352-1373 (PGTT…TGPT) and 1381-1415 (TRPT…AGSP). Polar residues-rich tracts occupy residues 1416–1455 (VPST…TSLV), 1471–1481 (ATSASNHSAPT), and 1490–1520 (LKAT…STNK). 2 stretches are compositionally biased toward low complexity: residues 1521-1567 (TPTS…ATSS) and 1574-1611 (TTHS…PQTT). Residues 1561 to 1738 (TNSATSSRPP…TTSGTSQSRS (178 aa)) form a 1; truncated repeat. Positions 1607–1953 (HPQTTLPTHV…STGTRTPVAH (347 aa)) are approximate repeats. Polar residues predominate over residues 1659–1686 (LKATGSTHTAPTMTLTTSGTSQALSSLN). The segment covering 1687 to 1768 (TAKTSTSLHS…PEVTSTSTTS (82 aa)) has biased composition (low complexity). The span at 1769–1793 (ITPNHTSTGTRTPVAHTTSATSSRL) shows a compositional bias: polar residues. Repeat 2 spans residues 1785–1953 (TTSATSSRLP…STGTRTPVAH (169 aa)). Low complexity-rich tracts occupy residues 1794-1834 (PTPF…HPHT) and 1891-1917 (TAPP…TSTS). Residues 1918–1962 (LPYHTSSTHHPEVTPTSTTNITPKHTSTGTRTPVAHTTSASSSRL) are compositionally biased toward polar residues. Low complexity predominate over residues 1963-1983 (PTPFTTHSPPTGSSPFSSTGP). Residues 2052-2070 (LKATGSTHTAPPMTVTTSG) are compositionally biased toward polar residues. Residues 2090–2102 (SSSWLPQNSSSRP) show a composition bias toward low complexity. Positions 2107–2120 (ITTQLPHLSSATTP) are enriched in polar residues. Residues 2121–2196 (VSTTNQLSSS…PTTASVSASP (76 aa)) are compositionally biased toward low complexity. The segment covering 2240–2264 (HLASSTIAFPSTPRTTASTHTAPAF) has biased composition (polar residues). A compositionally biased stretch (low complexity) spans 2265–2278 (SSQSTTSRSTSLTT). Over residues 2323 to 2347 (LTAHGSTPASAPVSSLGTPTPTSPG) the composition is skewed to polar residues. Cystine bridges form between Cys-2349/Cys-2396, Cys-2363/Cys-2410, Cys-2372/Cys-2430, and Cys-2376/Cys-2432. Positions 2349–2438 (CSVREQQEEI…HCVCSSVACG (90 aa)) constitute a CTCK domain.

Multimer; disulfide-linked. Post-translationally, O-glycosylated. As to expression, expressed in the regenerative zone of gastric antrum, gastric body mucosa and gastric incisura mucosa. Expressed in the deeper mucous glands of gastric antrum. Overexpressed in Helicobacter pylori infected gastric epithelium. Highly expressed in duodenal Brunner's glands, gall bladder, seminal vesicle, pancreatic centroacinar cells and ducts, and periductal glands of the common bile duct.

It localises to the secreted. May provide a mechanism for modulation of the composition of the protective mucus layer related to acid secretion or the presence of bacteria and noxious agents in the lumen. Plays an important role in the cytoprotection of epithelial surfaces and are used as tumor markers in a variety of cancers. May play a role in epithelial organogenesis. The polypeptide is Mucin-6 (MUC6) (Homo sapiens (Human)).